Consider the following 498-residue polypeptide: MPEEYLNAQKMEKLERIKSRGINPYPSTFHPSHTSAQAVALLVEIETQENHLKEVLKLAGRIMTRRDMGKISFMDIRDGSGKMQIFFRQNDLDEASIELLKDLDLGDFIGVEGSLMRTRTGEPSLAATKVSMLSKSLLPLPEKWHGLQDVEKRYRQRYLDLISNADARQTFLTRSRVISVIRAFMNAKGFLEVETPVLQPEAGGALARPFITHHQALNCDFYMRIALELHLKRLIVGGFDRVYEIGRIFRNEGISTRHNPEFTMMESYQAYANYKDVMDFLEEMVSSVVKEISGGYTLPFGDITLDFTPPWPRLTMRDAVKQYAGIDFFDFPTKETLAAEMTRRKLKVDPAKDWGKLVDELVGEFVEPHLVQPTFLTDHPVAMSPLAKQKPEDPRLTERFEAICANMEIANAFSELNDPVEQRARFKEQLEKRSQLRTDESESVDEDFLAALAYGMPPTGGLGVGIDRLVMLFTNHDSIREVILFPALKDREDTKTQE.

2 residues coordinate Mg(2+): E401 and E408.

This sequence belongs to the class-II aminoacyl-tRNA synthetase family. As to quaternary structure, homodimer. The cofactor is Mg(2+).

Its subcellular location is the cytoplasm. The enzyme catalyses tRNA(Lys) + L-lysine + ATP = L-lysyl-tRNA(Lys) + AMP + diphosphate. The polypeptide is Lysine--tRNA ligase (Dehalococcoides mccartyi (strain ATCC BAA-2100 / JCM 16839 / KCTC 5957 / BAV1)).